We begin with the raw amino-acid sequence, 988 residues long: Exportin-T (988 aa).

The protein belongs to the exportin family. Expressed in young leaves, growing leaf blades, young floral organs and root tips.

The protein resides in the nucleus. Its subcellular location is the cytoplasm. Its function is as follows. Probable tRNA nucleus export receptor which regulates tRNA processing and facilitates tRNA translocation across the nuclear pore complex. Is required for proper activity of the shoot apical meristem (SAM) and correct leaf initiation at different developmental stages, and may play a role in floral patterning. The polypeptide is Exportin-T (PSD) (Arabidopsis thaliana (Mouse-ear cress)).